The sequence spans 528 residues: Ulvan lyase, short isoform (528 aa).

Residues 1–29 (MKINLSMRELVSRLSTTLKTAIALSVLTA) form the signal peptide. Residue C30 is the site of N-palmitoyl cysteine attachment. C30 carries S-diacylglycerol cysteine lipidation. Residue 151 to 152 (SH) coordinates substrate. H152 functions as the Proton donor/acceptor in the catalytic mechanism. Positions 218, 228, and 230 each coordinate Ca(2+). Residues Y309 and R326 each coordinate substrate. Residues N329, D332, and F334 each coordinate Ca(2+). Substrate is bound at residue H390.

The protein belongs to the polysaccharide lyase 24 family.

It localises to the secreted. The protein resides in the cell membrane. Ulvan lyase involved in ulvan degradation. Ulvan is the main polysaccharide component of the Ulvales (green seaweed) cell wall. It is composed of disaccharide building blocks comprising 3-sulfated rhamnose (Rha3S) linked to D-glucuronic acid (GlcA), L-iduronic acid (IduA), or D-xylose (Xyl). Ulvan lyase catalyzes preferentially the endolytic cleavage of the glycosidic bond between Rha3S and the uronic acid GlcA, but not IduA, producing oligosaccharides that have unsaturated 4-deoxy-L-threo-hex-4-enopyranosiduronic acid (deltaUA) at the non-reducing end. The most abundant end products in the degradation of the ulvan polysaccharide were deltaUA-Rha3S disaccharides and deltaUA-Rha3S-IduA-Rha3S and deltaUA-Rha3S-Xyl-Rha3S tetrasaccharides. The sequence is that of Ulvan lyase, short isoform from Alteromonas sp. (strain LOR).